Here is a 485-residue protein sequence, read N- to C-terminus: Pumilio domain-containing protein 6 (485 aa).

Disordered stretches follow at residues 29–48 (NKTH…PYRH) and 55–76 (SDLD…TPPP). Over residues 55-68 (SDLDNYIFNSGSGS) the composition is skewed to polar residues. 8 Pumilio repeats span residues 86–124 (EVLL…AVFE), 125–163 (KLTE…ELLR), 164–200 (QMID…QLIQ), 201–236 (ELST…TFFV), 237–279 (HFLS…FRIQ), 287–324 (CIVR…TIID), 326–361 (CLLR…EMME), and 372–411 (ELNR…RQLP). The RNA-binding stretch occupies residues 439-454 (FSSGKKIIDSVMRHGV).

RNA-binding protein that binds to the consensus sequence 5'-CUCUGUAUCUUGU-3' in mRNA 3'-UTRs and modulates mRNA expression and stability. Functions redundantly with puf-5 and puf-7 in oocyte formation and organization, early embryonic cell divisions, and repression of expression of glp-1 and other maternal mRNAs in late oogenesis. In Caenorhabditis elegans, this protein is Pumilio domain-containing protein 6.